The sequence spans 334 residues: B1 bradykinin receptor (334 aa).

The interval 1-21 (MASQASLKLQPSNQSQQAPPN) is disordered. Residues 1-41 (MASQASLKLQPSNQSQQAPPNITSCEGAPEAWDLLCRVLPG) lie on the Extracellular side of the membrane. Residues 10–21 (QPSNQSQQAPPN) show a composition bias toward low complexity. N-linked (GlcNAc...) asparagine glycans are attached at residues Asn-13 and Asn-21. Residues 42 to 62 (FVITVCFFGLLGNLLVLSFFL) traverse the membrane as a helical segment. At 63 to 80 (LPWRRWWQQRRQRLTIAE) the chain is on the cytoplasmic side. Residues 81–101 (IYLANLAASDLVFVLGLPFWA) traverse the membrane as a helical segment. The Extracellular segment spans residues 102 to 118 (ENVGNRFNWPFGSDLCR). A disulfide bridge links Cys-117 with Cys-196. Residues 119 to 139 (VVSGVIKANLFISIFLVVAIS) form a helical membrane-spanning segment. The Cytoplasmic segment spans residues 140–161 (QDRYRLLVYPMTSWGNRRRRQA). The chain crosses the membrane as a helical span at residues 162–182 (QVTCLLIWVAGGLLSTPTFLL). The Extracellular portion of the chain corresponds to 183–214 (RSVKVVPDLNISACILLFPHEAWHFVRMVELN). Asn-192 carries N-linked (GlcNAc...) asparagine glycosylation. Residues 215–235 (VLGFLLPLAAILYFNFHILAS) form a helical membrane-spanning segment. Topologically, residues 236–258 (LRGQKEASRTRCGGPKDSKTMGL) are cytoplasmic. The chain crosses the membrane as a helical span at residues 259-279 (ILTLVASFLVCWAPYHFFAFL). Topologically, residues 280 to 302 (DFLVQVRVIQDCFWKELTDLGLQ) are extracellular. The helical transmembrane segment at 303 to 323 (LANFFAFVNSCLNPLIYVFAG) threads the bilayer. The Cytoplasmic portion of the chain corresponds to 324-334 (RLFKTRVLGTL).

This sequence belongs to the G-protein coupled receptor 1 family. Bradykinin receptor subfamily. BDKRB1 sub-subfamily. In terms of tissue distribution, expressed in heart, liver and lung.

The protein localises to the cell membrane. Its function is as follows. This is a receptor for bradykinin. Could be a factor in chronic pain and inflammation. The protein is B1 bradykinin receptor (Bdkrb1) of Mus musculus (Mouse).